A 201-amino-acid polypeptide reads, in one-letter code: Large ribosomal subunit protein bL25 (201 aa).

The protein belongs to the bacterial ribosomal protein bL25 family. CTC subfamily. As to quaternary structure, part of the 50S ribosomal subunit; part of the 5S rRNA/L5/L18/L25 subcomplex. Contacts the 5S rRNA. Binds to the 5S rRNA independently of L5 and L18.

In terms of biological role, this is one of the proteins that binds to the 5S RNA in the ribosome where it forms part of the central protuberance. The chain is Large ribosomal subunit protein bL25 from Burkholderia vietnamiensis (strain G4 / LMG 22486) (Burkholderia cepacia (strain R1808)).